A 380-amino-acid polypeptide reads, in one-letter code: Protein Wnt-5a (380 aa).

An N-terminal signal peptide occupies residues 1-40; the sequence is MRKNLWTFQFGGEASGLVGSAMVSQHFVVLLMSLYCLTQS. C104 and C115 are disulfide-bonded. N-linked (GlcNAc...) asparagine glycans are attached at residues N114 and N120. 10 disulfides stabilise this stretch: C154/C162, C164/C182, C238/C252, C240/C247, C309/C340, C325/C335, C339/C379, C355/C370, C357/C367, and C362/C363. A lipid anchor (O-palmitoleoyl serine; by PORCN) is attached at S244. 2 N-linked (GlcNAc...) asparagine glycosylation sites follow: N312 and N326.

This sequence belongs to the Wnt family. Post-translationally, palmitoleoylation is required for efficient binding to frizzled receptors. Depalmitoleoylation leads to Wnt signaling pathway inhibition. Found primarily in ectoderm with lower levels of expression in mesoderm. Detected in the head and tail with lower expression in the middle of the embryo. No expression was found in the notochord.

It localises to the secreted. The protein localises to the extracellular space. The protein resides in the extracellular matrix. Its function is as follows. Ligand for members of the frizzled family of seven transmembrane receptors. Can activate or inhibit canonical Wnt signaling, depending on receptor context. Plays a role in normal embryonic development. This is Protein Wnt-5a (wnt5a) from Xenopus laevis (African clawed frog).